Here is a 245-residue protein sequence, read N- to C-terminus: Glycerophosphodiester phosphodiesterase (245 aa).

Residues 2–241 form the GP-PDE domain; it reads TKIFAHRGFK…DFPDRAVKIR (240 aa). Residue His7 is the Proton acceptor of the active site. Positions 34 and 36 each coordinate a divalent metal cation. The active-site Proton donor is His49. Glu110 contributes to the a divalent metal cation binding site.

Belongs to the glycerophosphoryl diester phosphodiesterase family. Requires Ni(2+) as cofactor. The cofactor is Co(2+). Mn(2+) serves as cofactor.

It carries out the reaction a sn-glycero-3-phosphodiester + H2O = an alcohol + sn-glycerol 3-phosphate + H(+). Its activity is regulated as follows. Inhibited by EDTA and various organic solvents such as chloroform, toluene or benzene. Its function is as follows. Glycerophosphodiester phosphodiesterase hydrolyzes glycerophosphodiesters into glycerol-3-phosphate (G3P) and the corresponding alcohol. Can hydrolyze the model substrate bis-(p-nitrophenyl phosphate) (bis(pNPP)) to p-nitrophenol. Can also catalyze the degradation of diphenyl phosphate (DPHP) to phenyl phosphate (PHP). DPHP is an aryl phosphate ester used as a chemical additive and an industrial catalyst that can easily spread to the environment and exhibits toxicity toward organisms. The protein is Glycerophosphodiester phosphodiesterase of Bacillus altitudinis.